We begin with the raw amino-acid sequence, 301 residues long: MSSEFIEAGAADRVRILSEALPYLQQFAGRTVVVKYGGAAMKQEELKEAVMRDIVFLACVGMRPVVVHGGGPEINAWLGRVGIEPQFHNGLRVTDADTMEVVEMVLVGRVNKDIVSRINTTGGRAVGFCGTDGRLVLARPHDQEGIGFVGEVNSVNSEVIEPLLERGYIPVISSVAADENGQSFNINADTVAGEIAAALNAEKLILLTDTRGILEDPKRPESLIPRLNIPQSRELIAQGIVGGGMIPKVDCCIRSLAQGVRAAHIIDGRIPHALLLEIFTDAGIGTMIVGSGYHEAHQPWQ.

Residues 70-71 (GG), arginine 92, and asparagine 185 contribute to the substrate site.

The protein belongs to the acetylglutamate kinase family. ArgB subfamily.

Its subcellular location is the cytoplasm. It catalyses the reaction N-acetyl-L-glutamate + ATP = N-acetyl-L-glutamyl 5-phosphate + ADP. It functions in the pathway amino-acid biosynthesis; L-arginine biosynthesis; N(2)-acetyl-L-ornithine from L-glutamate: step 2/4. Functionally, catalyzes the ATP-dependent phosphorylation of N-acetyl-L-glutamate. The sequence is that of Acetylglutamate kinase from Synechococcus elongatus (strain ATCC 33912 / PCC 7942 / FACHB-805) (Anacystis nidulans R2).